Reading from the N-terminus, the 174-residue chain is Ferritin, heavy subunit (174 aa).

A Ferritin-like diiron domain is found at 7–156 (QNFHKDCEAA…DWVTNLRRLG (150 aa)). Residues E24, E59, H62, E104, and Q138 each coordinate Fe cation.

Belongs to the ferritin family. As to quaternary structure, in liver, forms a heteromer consisting of middle and heavy subunits. The functional molecule forms a roughly spherical shell with a diameter of 12 nm and contains a central cavity into which the insoluble mineral iron core is deposited. As to expression, liver (at protein level).

It catalyses the reaction 4 Fe(2+) + O2 + 4 H(+) = 4 Fe(3+) + 2 H2O. Its function is as follows. Stores iron in a soluble, non-toxic, readily available form. Important for iron homeostasis. Has ferroxidase activity. Iron is taken up in the ferrous form and deposited as ferric hydroxides after oxidation. Also plays a role in delivery of iron to cells. Mediates iron uptake in capsule cells of the developing kidney. Delivery to lysosomes is mediated by the cargo receptor NCOA4 for autophagic degradation and release of iron. In Trematomus newnesi (Dusky notothen), this protein is Ferritin, heavy subunit.